The primary structure comprises 667 residues: UvrABC system protein B (667 aa).

One can recognise a Helicase ATP-binding domain in the interval 31 to 414 (AGIESGEKEQ…EMDRTKHVVQ (384 aa)). An ATP-binding site is contributed by 44–51 (GATGTGKT). A Beta-hairpin motif is present at residues 97–120 (YYDYYQPEAYVPSSDTYIEKDSAI). Residues 435-597 (QIDDLVGEIN…ITPHTIKKAI (163 aa)) enclose the Helicase C-terminal domain. The 36-residue stretch at 630–665 (LDMISKLEEQMKTAAKKLDFEQAATLRDTVMELKAQ) folds into the UVR domain.

Belongs to the UvrB family. As to quaternary structure, forms a heterotetramer with UvrA during the search for lesions. Interacts with UvrC in an incision complex.

It localises to the cytoplasm. Functionally, the UvrABC repair system catalyzes the recognition and processing of DNA lesions. A damage recognition complex composed of 2 UvrA and 2 UvrB subunits scans DNA for abnormalities. Upon binding of the UvrA(2)B(2) complex to a putative damaged site, the DNA wraps around one UvrB monomer. DNA wrap is dependent on ATP binding by UvrB and probably causes local melting of the DNA helix, facilitating insertion of UvrB beta-hairpin between the DNA strands. Then UvrB probes one DNA strand for the presence of a lesion. If a lesion is found the UvrA subunits dissociate and the UvrB-DNA preincision complex is formed. This complex is subsequently bound by UvrC and the second UvrB is released. If no lesion is found, the DNA wraps around the other UvrB subunit that will check the other stand for damage. The polypeptide is UvrABC system protein B (Lactiplantibacillus plantarum (strain ATCC BAA-793 / NCIMB 8826 / WCFS1) (Lactobacillus plantarum)).